A 466-amino-acid polypeptide reads, in one-letter code: Phytase A (466 aa).

Positions 1–19 are cleaved as a signal peptide; the sequence is MGFLAIVLSVALLFRSTSG. Cysteines 31 and 40 form a disulfide. 1D-myo-inositol hexakisphosphate is bound by residues Y51, R81, H82, R85, and T88. Cystine bridges form between C71–C414, C215–C465, C264–C282, and C436–C444. H82 acts as the Nucleophile in catalysis. The N-linked (GlcNAc...) asparagine glycan is linked to N120. Residue R165 participates in 1D-myo-inositol hexakisphosphate binding. N207 and N230 each carry an N-linked (GlcNAc...) asparagine glycan. K301 contacts 1D-myo-inositol hexakisphosphate. N-linked (GlcNAc...) asparagine glycans are attached at residues N339 and N352. 1D-myo-inositol hexakisphosphate-binding residues include H361 and D362. N376 carries an N-linked (GlcNAc...) asparagine glycan.

The protein belongs to the histidine acid phosphatase family. As to quaternary structure, monomer.

The protein localises to the secreted. The catalysed reaction is 1D-myo-inositol hexakisphosphate + H2O = 1D-myo-inositol 1,2,4,5,6-pentakisphosphate + phosphate. It carries out the reaction 1D-myo-inositol 1,2,4,5,6-pentakisphosphate + H2O = 1D-myo-inositol 1,2,5,6-tetrakisphosphate + phosphate. It catalyses the reaction 1D-myo-inositol 1,2,5,6-tetrakisphosphate + H2O = 1D-myo-inositol 1,2,6-trisphosphate + phosphate. The enzyme catalyses 1D-myo-inositol 1,2,6-trisphosphate + H2O = 1D-myo-inositol 1,2-bisphosphate + phosphate. The catalysed reaction is 1D-myo-inositol 1,2-bisphosphate + H2O = 1D-myo-inositol 2-phosphate + phosphate. Catalyzes the phosphate monoester hydrolysis of phytic acid (myo-inositol hexakisphosphate), which results in the stepwise formation of myo-inositol pentakis-, tetrakis-, tris-, bis-, and monophosphates, as well as the liberation of inorganic phosphate. Myo-inositol 2-monophosphate is the end product. Has a broad substrate specificity and is also able to dephosphorylate other classic acid phosphatase substrates such as p-nitrophenyl phosphate, phenyl phosphate, fructose 1,6-bisphosphate, glucose 6-phosphate, 3-phosphoglycerate, as well as ADP and ATP. This chain is Phytase A, found in Aspergillus terreus.